A 38-amino-acid polypeptide reads, in one-letter code: Defensin-1 (38 aa).

3 cysteine pairs are disulfide-bonded: Cys-4–Cys-25, Cys-11–Cys-33, and Cys-15–Cys-35.

It localises to the secreted. Functionally, has antibacterial activity against the Gram-positive bacteria L.lactis and S.aureus, and against the Gram-negative bacteria E.coli D32 and V.parahemolyticus. The chain is Defensin-1 from Crassostrea virginica (Eastern oyster).